A 262-amino-acid polypeptide reads, in one-letter code: GTP cyclohydrolase 1 type 2 homolog (262 aa).

Residues histidine 64, histidine 65, aspartate 103, histidine 224, and glutamate 228 each coordinate a divalent metal cation.

It belongs to the GTP cyclohydrolase I type 2/NIF3 family. Homohexamer.

The sequence is that of GTP cyclohydrolase 1 type 2 homolog from Clostridium perfringens (strain 13 / Type A).